Consider the following 508-residue polypeptide: Mu-like prophage FluMu protein gp28 (508 aa).

The protein to phage Mu protein gp28.

This chain is Mu-like prophage FluMu protein gp28, found in Haemophilus influenzae (strain ATCC 51907 / DSM 11121 / KW20 / Rd).